The primary structure comprises 280 residues: 2,3,4,5-tetrahydropyridine-2,6-dicarboxylate N-succinyltransferase (280 aa).

Substrate contacts are provided by Arg-107 and Asp-144.

The protein belongs to the transferase hexapeptide repeat family. As to quaternary structure, homotrimer.

Its subcellular location is the cytoplasm. It carries out the reaction (S)-2,3,4,5-tetrahydrodipicolinate + succinyl-CoA + H2O = (S)-2-succinylamino-6-oxoheptanedioate + CoA. It participates in amino-acid biosynthesis; L-lysine biosynthesis via DAP pathway; LL-2,6-diaminopimelate from (S)-tetrahydrodipicolinate (succinylase route): step 1/3. The polypeptide is 2,3,4,5-tetrahydropyridine-2,6-dicarboxylate N-succinyltransferase (Granulibacter bethesdensis (strain ATCC BAA-1260 / CGDNIH1)).